Here is a 649-residue protein sequence, read N- to C-terminus: MAVNTEERHGQESLENHKHMFNQGVNYELYNFLGVHKISRDDESGYVFRVWAPHAKQVWVCGDFNNWDKSHPMILDEKSGIWSIEVKESRENQYYKYLVKQANGREIMKTDPMAQVYEKRPETAAVVKELEPFKWNDGLWRGRQKRMNHFNNPINIYEVHAPSWKEHEDGSLYTFKDLTAELIPYVKKMGYTHIEFMPLMEHPLPASWGYQLTGYFALCSSYGTPDEFKDFVNECHQNNIGVLVDWVPGHFSINDDALAYYDGTPTYEYEDPDRAKNIGWGALNFDLGKPEVQSFLLSSAFYWLNEFHLDGMRVDAVSNMIYLDYDEGPWKPNKYGDTRNLEGYAFLQKFNKVVKFAHPESLIIAEESSSGTQISGTIESGAIGFDYKWNMGWMNDVLEFFEMDPYFRKDNLNLVTFSFMYWQAENFVLPLSHDEVVHGKKSLMHKMWGDRYRQFAQLRTLYTFMMMHPGKKLLFMSGEWGQFLEWKFDHGLEWVDLQDEMNAKMQHFTSVLNHFYKEERPLWELGQQDATLEVIDADNHNDTVLSFIRHGKRKKDFLIVILNFTPVERRNFRIGVPYEGTYTEILNTEMKEFGGTWVEHNADSVSEEVNFKDYEHSITTTVPALGAIILKPKDIKVTRRSSKKHSHKK.

Catalysis depends on Asp315, which acts as the Nucleophile. Residue Glu366 is the Proton donor of the active site.

Belongs to the glycosyl hydrolase 13 family. GlgB subfamily. In terms of assembly, monomer.

The catalysed reaction is Transfers a segment of a (1-&gt;4)-alpha-D-glucan chain to a primary hydroxy group in a similar glucan chain.. It participates in glycan biosynthesis; glycogen biosynthesis. In terms of biological role, catalyzes the formation of the alpha-1,6-glucosidic linkages in glycogen by scission of a 1,4-alpha-linked oligosaccharide from growing alpha-1,4-glucan chains and the subsequent attachment of the oligosaccharide to the alpha-1,6 position. This Ligilactobacillus salivarius (strain UCC118) (Lactobacillus salivarius) protein is 1,4-alpha-glucan branching enzyme GlgB.